The chain runs to 425 residues: UDP-N-acetyl-D-glucosamine 6-dehydrogenase (425 aa).

NAD(+) contacts are provided by Val17, Asp35, Arg40, Thr86, and Thr121. The active-site Nucleophile is the Cys261. Residue Arg332 coordinates NAD(+).

It belongs to the UDP-glucose/GDP-mannose dehydrogenase family. Homotrimer.

It carries out the reaction UDP-N-acetyl-alpha-D-glucosamine + 2 NAD(+) + H2O = UDP-2-acetamido-2-deoxy-alpha-D-glucuronate + 2 NADH + 3 H(+). It functions in the pathway capsule biogenesis; capsule polysaccharide biosynthesis. It participates in glycan metabolism; Vi-antigen biosynthesis. In terms of biological role, dehydrogenase required for the biosynthesis of the capsular polysaccharide, commonly referred as the Vi antigen, an important virulence factor. Catalyzes the conversion of UDP-N-acetylglucosamine (UDP-GlcNAc) to UDP-N-acetylglucosaminuronic acid (UDP-GlcNAcA). Cannot use UDP-GalNAc, UDP-Glc and UDP-Gal as substrates. In Salmonella typhi, this protein is UDP-N-acetyl-D-glucosamine 6-dehydrogenase.